A 700-amino-acid polypeptide reads, in one-letter code: Methionine synthase reductase (700 aa).

The Flavodoxin-like domain maps to 4-147 (FLLLYATQRG…VVEPWIDGLW (144 aa)). FMN-binding positions include 10–14 (TQRGQ) and 93–124 (LLGL…QHFY). The interval 168 to 247 (TLAQASDAPL…SSLSIPAVSP (80 aa)) is hinge. Phosphoserine occurs at positions 173 and 190. The FAD-binding FR-type domain maps to 272 to 534 (DPIFQVPISK…PRATNSFHLP (263 aa)). Residue Lys-292 coordinates NADP(+). FAD contacts are provided by residues 452-455 (RPYS) and 488-491 (GVCT). Residues 611–612 (SR), 626–628 (YVQ), and Asp-661 each bind NADP(+). Trp-699 contacts FAD.

Forms a multiprotein complex with MMACHC, MMADHC and MTR. FAD is required as a cofactor. The cofactor is FMN.

It localises to the cytoplasm. The enzyme catalyses 2 methylcob(III)alamin-[methionine synthase] + 2 S-adenosyl-L-homocysteine + NADP(+) + H(+) = 2 cob(II)alamin-[methionine synthase] + 2 S-adenosyl-L-methionine + NADPH. It carries out the reaction 2 cob(II)alamin + A + 2 H2O + 2 H(+) = 2 aquacob(III)alamin + AH2. In terms of biological role, key enzyme in methionine and folate homeostasis responsible for the reactivation of methionine synthase (MTR/MS) activity by catalyzing the reductive methylation of MTR-bound cob(II)alamin. Cobalamin (vitamin B12) forms a complex with MTR to serve as an intermediary in methyl transfer reactions that cycles between MTR-bound methylcob(III)alamin and MTR bound-cob(I)alamin forms, and occasional oxidative escape of the cob(I)alamin intermediate during the catalytic cycle leads to the inactive cob(II)alamin species. The processing of cobalamin in the cytosol occurs in a multiprotein complex composed of at least MMACHC, MMADHC, MTRR and MTR which may contribute to shuttle safely and efficiently cobalamin towards MTR in order to produce methionine. Also necessary for the utilization of methyl groups from the folate cycle, thereby affecting transgenerational epigenetic inheritance. Also acts as a molecular chaperone for methionine synthase by stabilizing apoMTR and incorporating methylcob(III)alamin into apoMTR to form the holoenzyme. Also serves as an aquacob(III)alamin reductase by reducing aquacob(III)alamin to cob(II)alamin; this reduction leads to stimulation of the conversion of apoMTR and aquacob(III)alamin to MTR holoenzyme. In Rattus norvegicus (Rat), this protein is Methionine synthase reductase (Mtrr).